Reading from the N-terminus, the 412-residue chain is Early growth response protein 2b (412 aa).

Positions 269–299 (YTPQNLPLRPILRPRKYPNRPSKTPVHERPY) are disordered. C2H2-type zinc fingers lie at residues 299 to 323 (YPCP…IRIH), 329 to 351 (FQCR…IRTH), and 357 to 379 (FACD…TKIH). Positions 371–412 (ERKRHTKIHLRQKERKSSSSSTGVSSSERGVATSICSSSSNQ) are disordered. The span at 374–384 (RHTKIHLRQKE) shows a compositional bias: basic residues. Over residues 388-401 (SSSSTGVSSSERGV) the composition is skewed to low complexity.

It belongs to the EGR C2H2-type zinc-finger protein family.

Its subcellular location is the nucleus. Sequence-specific DNA-binding transcription factor. Binds to two specific DNA sites located in the promoter region of HOXA4. The chain is Early growth response protein 2b (egr2b) from Danio rerio (Zebrafish).